Reading from the N-terminus, the 178-residue chain is Transcription factor E (178 aa).

The region spanning 5–89 (AEELILSLAK…YWKVNIDQIN (85 aa)) is the HTH TFE/IIEalpha-type domain.

The protein belongs to the TFE family. Monomer. Interaction with RNA polymerase subunits RpoF and RpoE is necessary for Tfe stimulatory transcription activity. Able to interact with Tbp and RNA polymerase in the absence of DNA promoter. Interacts both with the preinitiation and elongation complexes.

Transcription factor that plays a role in the activation of archaeal genes transcribed by RNA polymerase. Facilitates transcription initiation by enhancing TATA-box recognition by TATA-box-binding protein (Tbp), and transcription factor B (Tfb) and RNA polymerase recruitment. Not absolutely required for transcription in vitro, but particularly important in cases where Tbp or Tfb function is not optimal. It dynamically alters the nucleic acid-binding properties of RNA polymerases by stabilizing the initiation complex and destabilizing elongation complexes. Seems to translocate with the RNA polymerase following initiation and acts by binding to the non template strand of the transcription bubble in elongation complexes. The chain is Transcription factor E from Sulfurisphaera tokodaii (strain DSM 16993 / JCM 10545 / NBRC 100140 / 7) (Sulfolobus tokodaii).